A 436-amino-acid chain; its full sequence is Bifunctional protein GlmU (436 aa).

Residues 1–225 are pyrophosphorylase; it reads MNNNTSIIIL…EQNFMGINDK (225 aa). Residues 10-13, K24, Q76, and 83-84 each bind UDP-N-acetyl-alpha-D-glucosamine; these read LAAG and GT. Position 104 (D104) interacts with Mg(2+). G137, E151, N166, and N223 together coordinate UDP-N-acetyl-alpha-D-glucosamine. N223 lines the Mg(2+) pocket. A linker region spans residues 226–246; sequence FQLSIAEKIMQDEIKQNLMKA. The tract at residues 247-436 is N-acetyltransferase; it reads GVLMRMPESI…KFFGKDDVKK (190 aa). Positions 310 and 327 each coordinate UDP-N-acetyl-alpha-D-glucosamine. The Proton acceptor role is filled by H338. Positions 341 and 352 each coordinate UDP-N-acetyl-alpha-D-glucosamine. Residues 361 to 362, S380, A398, and R415 contribute to the acetyl-CoA site; that span reads NY.

This sequence in the N-terminal section; belongs to the N-acetylglucosamine-1-phosphate uridyltransferase family. It in the C-terminal section; belongs to the transferase hexapeptide repeat family. In terms of assembly, homotrimer. Requires Mg(2+) as cofactor.

It is found in the cytoplasm. The enzyme catalyses alpha-D-glucosamine 1-phosphate + acetyl-CoA = N-acetyl-alpha-D-glucosamine 1-phosphate + CoA + H(+). It carries out the reaction N-acetyl-alpha-D-glucosamine 1-phosphate + UTP + H(+) = UDP-N-acetyl-alpha-D-glucosamine + diphosphate. It participates in nucleotide-sugar biosynthesis; UDP-N-acetyl-alpha-D-glucosamine biosynthesis; N-acetyl-alpha-D-glucosamine 1-phosphate from alpha-D-glucosamine 6-phosphate (route II): step 2/2. The protein operates within nucleotide-sugar biosynthesis; UDP-N-acetyl-alpha-D-glucosamine biosynthesis; UDP-N-acetyl-alpha-D-glucosamine from N-acetyl-alpha-D-glucosamine 1-phosphate: step 1/1. Its pathway is bacterial outer membrane biogenesis; LPS lipid A biosynthesis. Its function is as follows. Catalyzes the last two sequential reactions in the de novo biosynthetic pathway for UDP-N-acetylglucosamine (UDP-GlcNAc). The C-terminal domain catalyzes the transfer of acetyl group from acetyl coenzyme A to glucosamine-1-phosphate (GlcN-1-P) to produce N-acetylglucosamine-1-phosphate (GlcNAc-1-P), which is converted into UDP-GlcNAc by the transfer of uridine 5-monophosphate (from uridine 5-triphosphate), a reaction catalyzed by the N-terminal domain. This Campylobacter concisus (strain 13826) protein is Bifunctional protein GlmU.